The sequence spans 561 residues: Cytosolic purine 5'-nucleotidase (561 aa).

Asp-52 acts as the Nucleophile in catalysis. Residues Asp-52 and Asp-54 each coordinate GMP. Asp-52 and Asp-54 together coordinate IMP. Mg(2+)-binding residues include Asp-52 and Asp-54. Asp-54 acts as the Proton donor in catalysis. Arg-144 is a (2R)-2,3-bisphosphoglycerate binding site. Arg-144 and Asn-154 together coordinate ATP. DATP is bound by residues Arg-144 and Asn-154. Position 154 (Asn-154) interacts with adenosine. Asn-154 is a binding site for P(1),P(4)-bis(5'-adenosyl) tetraphosphate. Positions 202, 206, 215, 249, and 250 each coordinate GMP. IMP-binding residues include Arg-202, Asp-206, Lys-215, Thr-249, Asn-250, Ser-251, and Lys-292. Residue Lys-292 participates in GMP binding. Asp-351 lines the Mg(2+) pocket. Lys-362 provides a ligand contact to (2R)-2,3-bisphosphoglycerate. Lys-362 contacts P(1),P(4)-bis(5'-adenosyl) tetraphosphate. Phosphoserine is present on Ser-418. Positions 436 and 453 each coordinate adenosine. Residues Gln-453 and Arg-456 each coordinate ATP. Residues Gln-453 and Arg-456 each contribute to the dATP site. Gln-453 provides a ligand contact to P(1),P(4)-bis(5'-adenosyl) tetraphosphate. Residue Tyr-457 coordinates (2R)-2,3-bisphosphoglycerate. Residue Tyr-457 participates in P(1),P(4)-bis(5'-adenosyl) tetraphosphate binding. A phosphoserine mark is found at Ser-502, Ser-511, and Ser-527. The interval 538 to 561 (PLAPQEITHCHDEDDDEEEEEEEE) is disordered. The tract at residues 548–561 (HDEDDDEEEEEEEE) is required for tetramer assembly. A compositionally biased stretch (acidic residues) spans 550-561 (EDDDEEEEEEEE).

It belongs to the 5'(3')-deoxyribonucleotidase family. Homotetramer. Mg(2+) serves as cofactor. As to expression, widely expressed.

The protein localises to the cytoplasm. Its subcellular location is the cytosol. The catalysed reaction is a ribonucleoside 5'-phosphate + H2O = a ribonucleoside + phosphate. The enzyme catalyses a 2'-deoxyribonucleoside + a ribonucleoside 5'-phosphate = a ribonucleoside + a 2'-deoxyribonucleoside 5'-phosphate. It catalyses the reaction IMP + H2O = inosine + phosphate. It carries out the reaction GMP + H2O = guanosine + phosphate. The catalysed reaction is dIMP + H2O = 2'-deoxyinosine + phosphate. The enzyme catalyses dGMP + H2O = 2'-deoxyguanosine + phosphate. It catalyses the reaction XMP + H2O = xanthosine + phosphate. It carries out the reaction inosine + GMP = guanosine + IMP. The catalysed reaction is dGMP + inosine = 2'-deoxyguanosine + IMP. The enzyme catalyses dIMP + inosine = 2'-deoxyinosine + IMP. It catalyses the reaction inosine + UMP = uridine + IMP. It carries out the reaction inosine + CMP = cytidine + IMP. The catalysed reaction is inosine + AMP = IMP + adenosine. With respect to regulation, allosterically activated by various compounds including ATP, 2,3-BPG/2,3-Bisphosphoglyceric acid and Ap4A/P1,P4-bis(5'-adenosyl) tetraphosphate. Binding of an allosteric activator is a prerequisiste to magnesium and substrate binding. Inhibited by inorganic phosphate. Broad specificity cytosolic 5'-nucleotidase that catalyzes the dephosphorylation of 6-hydroxypurine nucleoside 5'-monophosphates. In addition, possesses a phosphotransferase activity by which it can transfer a phosphate from a donor nucleoside monophosphate to an acceptor nucleoside, preferably inosine, deoxyinosine and guanosine. Has the highest activities for IMP and GMP followed by dIMP, dGMP and XMP. Could also catalyze the transfer of phosphates from pyrimidine monophosphates but with lower efficiency. Through these activities regulates the purine nucleoside/nucleotide pools within the cell. This Homo sapiens (Human) protein is Cytosolic purine 5'-nucleotidase.